A 54-amino-acid chain; its full sequence is uncharacterized protein (54 aa).

This is an uncharacterized protein from Saccharomyces cerevisiae (strain ATCC 204508 / S288c) (Baker's yeast).